Here is a 416-residue protein sequence, read N- to C-terminus: Lipid phosphate phosphatase delta (416 aa).

A run of 2 helical transmembrane segments spans residues 72-92 and 104-124; these read FFSGLSCVVSVPFYTAFLPLL and MTLLIAFCDYLGNCIKDVVSA. Positions 119–127 are phosphatase sequence motif I; sequence KDVVSAPRP. The segment at 151–154 is phosphatase sequence motif II; it reads PSSH. Catalysis depends on histidine 154, which acts as the Proton donor. The helical transmembrane segment at 178 to 198 threads the bilayer; sequence VSIQYYGFALACLLVALIAFG. A phosphatase sequence motif III region spans residues 198–209; it reads GRVYLGMHSVVD. Histidine 205 serves as the catalytic Nucleophile. 5 helical membrane passes run 207 to 227, 241 to 261, 266 to 286, 302 to 322, and 393 to 413; these read VVDIVSGLAIGVLILGLWLTV, VSSFWTALSFLLLFAYPTPEH, YEYHTAFNGVTLGIVTGVQQT, ELPISSYLGRVMVGIPTILLV, and FFQYAGLAWSVVDLVPSLFSY.

It belongs to the type 2 lipid phosphate phosphatase family.

The protein localises to the endoplasmic reticulum membrane. Functionally, functions as a sphingoid long-chain base phosphate (LCBP) phosphatase. May play a role in the regulation of LCBP levels and be involved in stomatal responses through LCBP-mediated ABA signaling. The polypeptide is Lipid phosphate phosphatase delta (LPPD) (Arabidopsis thaliana (Mouse-ear cress)).